A 253-amino-acid polypeptide reads, in one-letter code: Indole-3-glycerol phosphate synthase (253 aa).

Belongs to the TrpC family.

It carries out the reaction 1-(2-carboxyphenylamino)-1-deoxy-D-ribulose 5-phosphate + H(+) = (1S,2R)-1-C-(indol-3-yl)glycerol 3-phosphate + CO2 + H2O. The protein operates within amino-acid biosynthesis; L-tryptophan biosynthesis; L-tryptophan from chorismate: step 4/5. The protein is Indole-3-glycerol phosphate synthase of Bacillus cereus (strain B4264).